We begin with the raw amino-acid sequence, 334 residues long: GTPase Obg (334 aa).

The region spanning 1 to 159 is the Obg domain; sequence MRFVDEVVIK…KEVRLELNLL (159 aa). One can recognise an OBG-type G domain in the interval 160-331; it reads ADVALLGLPN…LAKKLNEFLQ (172 aa). Residues 166–173, 191–195, 212–215, 282–285, and 312–314 contribute to the GTP site; these read GLPNAGKS, FTTMY, DIPG, NKID, and SAA. Mg(2+) is bound by residues Ser-173 and Thr-193.

It belongs to the TRAFAC class OBG-HflX-like GTPase superfamily. OBG GTPase family. In terms of assembly, monomer. Mg(2+) is required as a cofactor.

Its subcellular location is the cytoplasm. Functionally, an essential GTPase which binds GTP, GDP and possibly (p)ppGpp with moderate affinity, with high nucleotide exchange rates and a fairly low GTP hydrolysis rate. Plays a role in control of the cell cycle, stress response, ribosome biogenesis and in those bacteria that undergo differentiation, in morphogenesis control. The polypeptide is GTPase Obg (Francisella tularensis subsp. mediasiatica (strain FSC147)).